Consider the following 535-residue polypeptide: Large neutral amino acids transporter small subunit 2 (535 aa).

Basic and acidic residues predominate over residues 1-17; the sequence is MEEGARHRNNTEKKHPG. Residues 1–30 form a disordered region; sequence MEEGARHRNNTEKKHPGGGESDASPEAGSG. Topologically, residues 1–44 are cytoplasmic; the sequence is MEEGARHRNNTEKKHPGGGESDASPEAGSGGGGVALKKEIGLVS. Ser-29 is modified (phosphoserine). The helical transmembrane segment at 45-65 threads the bilayer; it reads ACGIIVGNIIGSGIFVSPKGV. Ile-53 is an L-leucine binding site. The Extracellular portion of the chain corresponds to 66–73; sequence LENAGSVG. Residues 74–95 form a helical membrane-spanning segment; that stretch reads LALIVWIVTGFITVVGALCYAE. Topologically, residues 96–116 are cytoplasmic; the sequence is LGVTIPKSGGDYSYVKDIFGG. The chain crosses the membrane as a helical span at residues 117 to 149; sequence LAGFLRLWIAVLVIYPTNQAVIALTFSNYVLQP. Asn-134 contributes to the L-tryptophan binding site. The Extracellular portion of the chain corresponds to 150–157; the sequence is LFPTCFPP. Residues 158-178 form a helical membrane-spanning segment; that stretch reads ESGLRLLAAICLLLLTWVNCS. At 179 to 181 the chain is on the cytoplasmic side; the sequence is SVR. A helical membrane pass occupies residues 182 to 210; the sequence is WATRVQDIFTAGKLLALALIIIMGIVQIC. Topologically, residues 211–230 are extracellular; it reads KGEYFWLEPKNAFENFQEPD. A helical membrane pass occupies residues 231-252; the sequence is IGLVALAFLQGSFAYGGWNFLN. An L-leucine-binding site is contributed by Gly-246. Residues 253 to 265 are Cytoplasmic-facing; that stretch reads YVTEELVDPYKNL. A helical transmembrane segment spans residues 266–287; it reads PRAIFISIPLVTFVYVFANVAY. At 288–312 the chain is on the extracellular side; sequence VTAMSPQELLASNAVAVTFGEKLLG. The helical transmembrane segment at 313–338 threads the bilayer; it reads VMAWIMPISVALSTFGGVNGSLFTSS. Residues 339–364 are Cytoplasmic-facing; that stretch reads RLFFAGAREGHLPSVLAMIHVKRCTP. A helical transmembrane segment spans residues 365-382; sequence IPALLFTCISTLLMLVTS. Over 383–386 the chain is Extracellular; sequence DMYT. Residues 387–408 traverse the membrane as a helical segment; sequence LINYVGFINYLFYGVTVAGQIV. Asn-395 provides a ligand contact to L-tryptophan. Residues 409-423 lie on the Cytoplasmic side of the membrane; that stretch reads LRWKKPDIPRPIKIN. A run of 2 helical transmembrane segments spans residues 424 to 446 and 447 to 466; these read LLFP…WSEP and VVCG…YFLG. Topologically, residues 467–535 are cytoplasmic; that stretch reads VYWQHKPKCF…DKDVAGQPQP (69 aa). A disordered region spans residues 502–535; sequence SGTEEANEDMEEQQQPMYQPTPTKDKDVAGQPQP. Polar residues predominate over residues 514-523; the sequence is QQQPMYQPTP.

The protein belongs to the amino acid-polyamine-organocation (APC) superfamily. L-type amino acid transporter (LAT) (TC 2.A.3.8) family. As to quaternary structure, disulfide-linked heterodimer composed of the catalytic light chain subunit SLC7A8 and the heavy chain subunit SLC3A2. SLC3A2 acts as chaperones for correct plasma membrane trafficking and stabilization of SLC7A8 and modulates the substrate affinity and specificity of SLC7A8. ICAM-1 associates with the heterodimer SLC3A2/SLC7A8; this interaction regulates SLC7A8 activity. Strongest expression is observed in kidney and moderate expression in placenta and brain, followed by liver, prostate, testis, ovary, lymph node, thymus, spleen, skeletal muscle and heart. Also expressed in fetal liver as well as in the retinal pigment epithelial cell line ARPE-19 and the intestinal epithelial cell line Caco-2.

It is found in the cell membrane. The protein localises to the basolateral cell membrane. It catalyses the reaction L-histidine(in) + L-phenylalanine(out) = L-histidine(out) + L-phenylalanine(in). The catalysed reaction is L-tryptophan(in) + L-phenylalanine(out) = L-tryptophan(out) + L-phenylalanine(in). The enzyme catalyses L-isoleucine(in) + L-phenylalanine(out) = L-isoleucine(out) + L-phenylalanine(in). It carries out the reaction L-valine(in) + L-phenylalanine(out) = L-valine(out) + L-phenylalanine(in). It catalyses the reaction L-leucine(in) + L-phenylalanine(out) = L-leucine(out) + L-phenylalanine(in). The catalysed reaction is L-glutamine(in) + L-phenylalanine(out) = L-glutamine(out) + L-phenylalanine(in). The enzyme catalyses L-cysteine(in) + L-phenylalanine(out) = L-cysteine(out) + L-phenylalanine(in). It carries out the reaction L-phenylalanine(out) + L-methionine(in) = L-phenylalanine(in) + L-methionine(out). It catalyses the reaction L-leucine(out) + L-methionine(in) = L-leucine(in) + L-methionine(out). The catalysed reaction is L-cysteine(out) + L-methionine(in) = L-cysteine(in) + L-methionine(out). The enzyme catalyses S-methylmercury-L-cysteine(out) + L-methionine(in) = S-methylmercury-L-cysteine(in) + L-methionine(out). It carries out the reaction S-methylmercury-L-cysteine(in) + L-leucine(out) = S-methylmercury-L-cysteine(out) + L-leucine(in). It catalyses the reaction S-methylmercury-L-cysteine(in) + L-phenylalanine(out) = S-methylmercury-L-cysteine(out) + L-phenylalanine(in). The catalysed reaction is L-phenylalanine(out) + L-serine(in) = L-phenylalanine(in) + L-serine(out). The enzyme catalyses L-phenylalanine(out) + glycine(in) = L-phenylalanine(in) + glycine(out). It carries out the reaction L-phenylalanine(out) + L-alanine(in) = L-phenylalanine(in) + L-alanine(out). It catalyses the reaction 3,3'-diiodo-L-thyronine(out) = 3,3'-diiodo-L-thyronine(in). The catalysed reaction is 3,3',5-triiodo-L-thyronine(out) = 3,3',5-triiodo-L-thyronine(in). The enzyme catalyses L-dopa(out) + L-phenylalanine(in) = L-dopa(in) + L-phenylalanine(out). Its activity is regulated as follows. Inhibited by the L-type inhibitor 2-Aminobicyclo-(2,2,1)-heptane-2-carboxylic acid (BCH). Its function is as follows. Associates with SLC3A2 to form a functional heterodimeric complex that translocates small and large neutral amino acids with broad specificity and a stoichiometry of 1:1. Functions as amino acid antiporter mediating the influx of extracellular essential amino acids mainly in exchange with the efflux of highly concentrated intracellular amino acids. Has relatively symmetrical selectivities but strongly asymmetrical substrate affinities at both the intracellular and extracellular sides of the transporter. This asymmetry allows SLC7A8 to regulate intracellular amino acid pools (mM concentrations) by exchange with external amino acids (uM concentration range), equilibrating the relative concentrations of different amino acids across the plasma membrane instead of mediating their net uptake. May play an essential role in the reabsorption of neutral amino acids from the epithelial cells to the bloodstream in the kidney. Involved in the uptake of methylmercury (MeHg) when administered as the L-cysteine or D,L-homocysteine complexes, and hence plays a role in metal ion homeostasis and toxicity. Involved in the cellular activity of small molecular weight nitrosothiols, via the stereoselective transport of L-nitrosocysteine (L-CNSO) across the transmembrane. Imports the thyroid hormone diiodothyronine (T2) and to a smaller extent triiodothyronine (T3) but not rT 3 or thyroxine (T4). Mediates the uptake of L-DOPA. May participate in auditory function. The polypeptide is Large neutral amino acids transporter small subunit 2 (Homo sapiens (Human)).